Reading from the N-terminus, the 207-residue chain is Guanylate kinase (207 aa).

The region spanning 4 to 184 is the Guanylate kinase-like domain; it reads GTLYIVSAPS…ALMDFKAILR (181 aa). Position 11–18 (11–18) interacts with ATP; it reads APSGAGKS.

The protein belongs to the guanylate kinase family.

The protein localises to the cytoplasm. It catalyses the reaction GMP + ATP = GDP + ADP. In terms of biological role, essential for recycling GMP and indirectly, cGMP. The chain is Guanylate kinase from Vibrio parahaemolyticus serotype O3:K6 (strain RIMD 2210633).